A 423-amino-acid chain; its full sequence is Glucoside xylosyltransferase 2 (423 aa).

The Cytoplasmic portion of the chain corresponds to 1–6 (MRFRWK). The helical; Signal-anchor for type II membrane protein transmembrane segment at 7–26 (FFGSLLCVTGLLLVLYRQLG) threads the bilayer. Residues 27 to 423 (NVPQPPPGPA…RVVVHIRSDV (397 aa)) are Lumenal-facing. The disordered stretch occupies residues 60–85 (RRDARQGGKKKTNWNNVRAPEQKPNP). N-linked (GlcNAc...) asparagine glycosylation is found at Asn-215 and Asn-256.

This sequence belongs to the glycosyltransferase 8 family.

It is found in the membrane. The catalysed reaction is 3-O-(beta-D-glucosyl)-L-seryl-[EGF-like domain protein] + UDP-alpha-D-xylose = 3-O-[alpha-D-xylosyl-(1-&gt;3)-beta-D-glucosyl]-L-seryl-[EGF-like domain protein] + UDP + H(+). Glycosyltransferase which elongates the O-linked glucose attached to EGF-like repeats in the extracellular domain of Notch proteins by catalyzing the addition of xylose. This chain is Glucoside xylosyltransferase 2 (gxylt2), found in Xenopus laevis (African clawed frog).